We begin with the raw amino-acid sequence, 450 residues long: Phosphoglucosamine mutase (450 aa).

Ser-101 functions as the Phosphoserine intermediate in the catalytic mechanism. Ser-101, Asp-241, Asp-243, and Asp-245 together coordinate Mg(2+). Ser-101 is subject to Phosphoserine.

This sequence belongs to the phosphohexose mutase family. Requires Mg(2+) as cofactor. Activated by phosphorylation.

It catalyses the reaction alpha-D-glucosamine 1-phosphate = D-glucosamine 6-phosphate. Catalyzes the conversion of glucosamine-6-phosphate to glucosamine-1-phosphate. The polypeptide is Phosphoglucosamine mutase (Listeria monocytogenes serotype 4b (strain F2365)).